Here is a 602-residue protein sequence, read N- to C-terminus: Threonine--tRNA ligase (602 aa).

The segment at 208 to 499 is catalytic; the sequence is DHRKLGTELK…LTEHCAGEFP (292 aa). Cys300, His351, and His476 together coordinate Zn(2+).

It belongs to the class-II aminoacyl-tRNA synthetase family. In terms of assembly, homodimer. Requires Zn(2+) as cofactor.

It localises to the cytoplasm. The catalysed reaction is tRNA(Thr) + L-threonine + ATP = L-threonyl-tRNA(Thr) + AMP + diphosphate + H(+). Its function is as follows. Catalyzes the attachment of threonine to tRNA(Thr) in a two-step reaction: L-threonine is first activated by ATP to form Thr-AMP and then transferred to the acceptor end of tRNA(Thr). Also edits incorrectly charged L-seryl-tRNA(Thr). This chain is Threonine--tRNA ligase, found in Campylobacter jejuni subsp. jejuni serotype O:6 (strain 81116 / NCTC 11828).